A 659-amino-acid chain; its full sequence is Protein NEDD1 (659 aa).

WD repeat units lie at residues 1–31 (MQENLRFASSGDDVKIWDASSMTLVDKFNPH), 32–71 (TAPHAISSVCWSSNNNFLVTASSSGDKIVVSSCKCKPVPL), 75–114 (GEGQKQTCVSLNSTSMYLVSGGLNNTVNIWDLKSKRVHRS), 117–156 (DHKDEVTCVTYNWNDCYIASGSLSGEIILHSVTTNLSSTP), 160–200 (GSNQ…PYHN), 204–244 (THKA…LVKT), 246–285 (VADAPLTAVDFMPDGATLAIGSSRGKIYQYDLRMLKSPIK), and 289–332 (AHKT…SAGG). T382 is modified (phosphothreonine; by PLK1). A disordered region spans residues 383–433 (LSKEAESGKNQDFSNFDDSGKSSLGDMFSPVRDDAVVSKGGDESIGKGDGL). A Phosphoserine modification is found at S411. A compositionally biased stretch (basic and acidic residues) spans 413–432 (VRDDAVVSKGGDESIGKGDG). A Phosphoserine; by PLK1 modification is found at S426. A phosphoserine mark is found at S468 and S515. Residues 508-522 (ETGNLNASPSSNQTR) show a composition bias toward polar residues. The disordered stretch occupies residues 508–531 (ETGNLNASPSSNQTRSPEKFEKPE). Phosphothreonine; by CDK1 is present on T549. At S636 the chain carries Phosphoserine; by PLK1.

Interacts with FAM29A. Interacts with HSPA1A and HSPA1B. Interacts with gamma-tubulin in a HSPA1A/B-dependent manner. During mitosis, prior phosphorylation on Thr-549 by CDK1 promotes subsequent phosphorylation by PLK1 on Thr-382, Ser-426 and Ser-636. Phosphorylated NEDD1 can interact with gamma-tubulin for targeting the gamma-tubulin ring complex (gTuRC) to the centrosome, an important step for spindle formation.

The protein localises to the cytoplasm. It is found in the cytoskeleton. It localises to the microtubule organizing center. Its subcellular location is the centrosome. In terms of biological role, required for mitosis progression. Promotes the nucleation of microtubules from the spindle. This Bos taurus (Bovine) protein is Protein NEDD1 (NEDD1).